We begin with the raw amino-acid sequence, 87 residues long: Olfactory receptor-like protein HbT2 (87 aa).

Residues 1 to 8 (KLWRMTGT) are Cytoplasmic-facing. Residues 9-29 (WLGGFCHSIIQIPVIIQLPFC) traverse the membrane as a helical segment. Over 30–55 (GPNVIDHYFRDLQPLFKLACTDTFME) the chain is Extracellular. Residues 56–76 (GVIVLAFSGLFSVFSFLILVS) traverse the membrane as a helical segment. Residues 77 to 87 (SYIVILVNLRN) are Cytoplasmic-facing.

Belongs to the G-protein coupled receptor 1 family.

Its subcellular location is the cell membrane. In terms of biological role, odorant receptor. The polypeptide is Olfactory receptor-like protein HbT2 (Apis mellifera ligustica (Common honeybee)).